A 166-amino-acid chain; its full sequence is Putative tRNA (cytidine(34)-2'-O)-methyltransferase (166 aa).

Leu-83, Gly-109, Ile-130, and Ser-138 together coordinate S-adenosyl-L-methionine.

The protein belongs to the class IV-like SAM-binding methyltransferase superfamily. RNA methyltransferase TrmH family. TrmL subfamily.

It is found in the cytoplasm. The enzyme catalyses cytidine(34) in tRNA + S-adenosyl-L-methionine = 2'-O-methylcytidine(34) in tRNA + S-adenosyl-L-homocysteine + H(+). It catalyses the reaction 5-carboxymethylaminomethyluridine(34) in tRNA(Leu) + S-adenosyl-L-methionine = 5-carboxymethylaminomethyl-2'-O-methyluridine(34) in tRNA(Leu) + S-adenosyl-L-homocysteine + H(+). In terms of biological role, could methylate the ribose at the nucleotide 34 wobble position in tRNA. The chain is Putative tRNA (cytidine(34)-2'-O)-methyltransferase from Mycoplasma genitalium (strain ATCC 33530 / DSM 19775 / NCTC 10195 / G37) (Mycoplasmoides genitalium).